Here is a 1673-residue protein sequence, read N- to C-terminus: Leucine-rich repeat- and IQ domain-containing protein 1 (1673 aa).

2 disordered regions span residues 22-48 (ISIS…SDTD) and 189-208 (LEEK…KRTF). One copy of the LRR 1 repeat lies at 34–59 (NDSVSDTQSDSSDTDLLELPESVLHY). One copy of the LRR 2 repeat lies at 216 to 239 (QCWMRQFEVEKKHLEDLQKQDQDK). An IQ 1 domain is found at 291–320 (RYDAAVKIQATYRASVTYRKYSPIIKEQME). The tract at residues 324-374 (RRAQELKEKEAKIRQKEEEKRRRLEEEQRVEEEKKKKMLEERRRREREYEE) is disordered. Over residues 326–374 (AQELKEKEAKIRQKEEEKRRRLEEEQRVEEEKKKKMLEERRRREREYEE) the composition is skewed to basic and acidic residues. The stretch at 491 to 516 (LPKLKINENLSKNQCSEQPSDQEFNA) is one LRR 3 repeat. Disordered stretches follow at residues 544-658 (ESDT…EEIP) and 679-702 (EGEA…GSHS). 2 stretches are compositionally biased toward basic and acidic residues: residues 549 to 567 (TEEH…ETEK) and 588 to 602 (EETR…EIKE). Over residues 603 to 629 (MTQQGGPSDENNSSPISMQKSLPSLTP) the composition is skewed to polar residues. An LRR 4 repeat occupies 641–665 (LEEDQETDLKSERIEEIPEEGVLSC). Positions 647–656 (TDLKSERIEE) are enriched in basic and acidic residues. LRR repeat units lie at residues 830–852 (CSNL…LSHC), 853–873 (TRLK…CENL), 874–894 (ENLS…GFDG), 895–919 (CTNL…SLKY), 921–939 (QELT…LCEA), 940–961 (PTIV…IGNC), 962–983 (GLLQ…LRNH), 984–1005 (VLLR…LSSC), 1007–1029 (LPLL…LFHL), 1030–1054 (VSLE…WFNA), and 1067–1090 (PVLQ…VLNG). 2 disordered regions span residues 1163–1230 (AHEQ…HCEE) and 1308–1330 (PTTT…EERR). Polar residues-rich tracts occupy residues 1168–1226 (DVNT…PSTS) and 1308–1325 (PTTT…QTTS). 2 IQ domains span residues 1280 to 1309 (PTKA…MHPT) and 1340 to 1369 (REKA…AIKD). An LRR 16 repeat occupies 1378–1405 (EIDLEDFEFDEDALEKDWPALDSTGFPS).

This Mus musculus (Mouse) protein is Leucine-rich repeat- and IQ domain-containing protein 1 (Lrriq1).